A 397-amino-acid polypeptide reads, in one-letter code: uncharacterized protein (397 aa).

Cys47, Cys53, Cys56, and Cys131 together coordinate [4Fe-4S] cluster. S-adenosyl-L-methionine is bound by residues Gln235, Phe262, Glu282, and Asp328. Cys354 (nucleophile) is an active-site residue.

It belongs to the class I-like SAM-binding methyltransferase superfamily. RNA M5U methyltransferase family.

This is an uncharacterized protein from Zymomonas mobilis subsp. mobilis (strain ATCC 31821 / ZM4 / CP4).